The chain runs to 670 residues: Cyclic AMP-dependent transcription factor ATF-6 alpha (670 aa).

Positions M1–E150 are transcription activation. At M1–R377 the chain is on the cytoplasmic side. Residue K87 forms a Glycyl lysine isopeptide (Lys-Gly) (interchain with G-Cter in SUMO2) linkage. Positions Q91–P183 are disordered. Composition is skewed to low complexity over residues S94–S113 and L123–L134. A Glycyl lysine isopeptide (Lys-Gly) (interchain with G-Cter in ubiquitin) cross-link involves residue K152. A bZIP domain is found at V306–L369. The tract at residues R308–K339 is basic motif. Positions L348–L355 are leucine-zipper. A helical; Signal-anchor for type II membrane protein membrane pass occupies residues V378–L398. Residues E399–Q670 are Lumenal-facing. The tract at residues Q468 to P589 is interaction with THBS4. N472, N584, and N643 each carry an N-linked (GlcNAc...) asparagine glycan.

It belongs to the bZIP family. ATF subfamily. As to quaternary structure, interacts with XBP1 isoform 2; the interaction occurs in a ER stress-dependent manner. Interacts with LACC1. In terms of assembly, interacts with THBS4 (via EGF-like 3; calcium-binding domain) which facilitates its processing, activation and nuclear translocation. Interacts (via lumenal domain) with THBS1. Homodimer and heterodimer with ATF6-beta. The dimer interacts with the nuclear transcription factor Y (NF-Y) trimer through direct binding to NF-Y subunit C (NF-YC). Also interacts with the transcription factors GTF2I, YY1 and SRF. In terms of processing, during unfolded protein response, a fragment of approximately 50 kDa containing the cytoplasmic transcription factor domain is released by proteolysis. The cleavage seems to be performed sequentially by site-1 (MBTPS1, S1P) and site-2 (MBTPS2, S2P) proteases. Post-translationally, N-glycosylated; in its luminal domain. The glycosylation status may serve as a sensor for ER homeostasis, resulting in ATF6 activation to trigger the unfolded protein response (UPR). Ubiquitinated by RNF186 at Lys-152, which is required for pattern recognition receptor-induced unfolded protein response-associated outcomes. Ubiquitous.

The protein localises to the endoplasmic reticulum membrane. It is found in the golgi apparatus membrane. It localises to the nucleus. Functionally, precursor of the transcription factor form (Processed cyclic AMP-dependent transcription factor ATF-6 alpha), which is embedded in the endoplasmic reticulum membrane. Endoplasmic reticulum stress promotes processing of this form, releasing the transcription factor form that translocates into the nucleus, where it activates transcription of genes involved in the unfolded protein response (UPR). In terms of biological role, transcription factor that initiates the unfolded protein response (UPR) during endoplasmic reticulum stress by activating transcription of genes involved in the UPR. Binds DNA on the 5'-CCAC[GA]-3'half of the ER stress response element (ERSE) (5'-CCAAT-N(9)-CCAC[GA]-3') and of ERSE II (5'-ATTGG-N-CCACG-3'). Binding to ERSE requires binding of NF-Y to ERSE. Could also be involved in activation of transcription by the serum response factor. May play a role in foveal development and cone function in the retina. The polypeptide is Cyclic AMP-dependent transcription factor ATF-6 alpha (ATF6) (Homo sapiens (Human)).